Consider the following 1238-residue polypeptide: Receptor-type tyrosine-protein phosphatase eta (1238 aa).

An N-terminal signal peptide occupies residues 1 to 28; sequence MKPAARETRTPPRSPGLRWALLPLLLLL. The Extracellular portion of the chain corresponds to 29–876; the sequence is RQGQVLCAGA…LPQDPGVICG (848 aa). The Fibronectin type-III 1 domain maps to 39–122; sequence APNPIFDIEA…LNKTITTEPW (84 aa). 37 N-linked (GlcNAc...) asparagine glycosylation sites follow: Asn62, Asn78, Asn85, Asn90, Asn110, Asn114, Asn145, Asn164, Asn173, Asn182, Asn198, Asn207, Asn244, Asn253, Asn267, Asn278, Asn313, Asn317, Asn333, Asn366, Asn379, Asn398, Asn403, Asn437, Asn452, Asn488, Asn506, Asn538, Asn572, Asn576, Asn662, Asn668, Asn685, Asn691, Asn725, Asn811, and Asn838. Residues 170-266 enclose the Fibronectin type-III 2 domain; sequence PGTNNSFAFP…GQPRNKVFKT (97 aa). 6 consecutive Fibronectin type-III domains span residues 270–358, 359–443, 444–527, 528–621, 622–718, and 717–803; these read QVSD…SPDQ, VSDF…TDPS, AVTD…TQYT, RPSS…TEPE, PVTS…TDPP, and PPTP…SEVL. The helical transmembrane segment at 877-897 threads the bilayer; it reads AVFGCIFGALAITAVGGFIFW. Residues 898–1238 are Cytoplasmic-facing; sequence RKKRTDAKNN…MFGKTNGYIA (341 aa). At Ser910 the chain carries Phosphoserine. Residues 942-1199 enclose the Tyrosine-protein phosphatase domain; that stretch reads FAEEYEDLKL…VFLNQCVLDI (258 aa). Substrate contacts are provided by residues Asp1106, 1140-1146, and Gln1184; that span reads CSAGVGR. Cys1140 functions as the Phosphocysteine intermediate in the catalytic mechanism.

The protein belongs to the protein-tyrosine phosphatase family. Receptor class 3 subfamily. In terms of assembly, monomer. Interacts with CTNNB1 (phosphorylated) and JUP (phosphorylated). Interacts with FLT3 (phosphorylated). Interacts with GAB1 and GRB2. As to expression, expressed at high levels in brain, kidney, spleen and intestine, and at lower levels in liver, lung, thymus and heart. Expressed at a high level in the myeloid cell line FDC-P2, and at a lower level in the pre-B lymphoid cell line WEHI-231 and the T hybridoma cell line HB21.7.31. Not expressed in the fibroblast cell line NIH3T3 or the erythroid cell line F5-5. Expressed in macrophages.

Its subcellular location is the cell membrane. It localises to the cell projection. The protein localises to the ruffle membrane. The protein resides in the cell junction. The catalysed reaction is O-phospho-L-tyrosyl-[protein] + H2O = L-tyrosyl-[protein] + phosphate. Its function is as follows. Tyrosine phosphatase which dephosphorylates or contributes to the dephosphorylation of CTNND1, FLT3, PDGFRB, MET, KDR, LYN, SRC, MAPK1, MAPK3, EGFR, TJP1, OCLN, PIK3R1 and PIK3R2. Plays a role in cell adhesion, migration, proliferation and differentiation. Has a role in megakaryocytes and platelet formation. Involved in vascular development. May be involved in the mechanism of contact inhibition of cell growth. Regulator of macrophage adhesion and spreading. Positively affects cell-matrix adhesion. Positive regulator of platelet activation and thrombosis. Negative regulator of cell proliferation. Negative regulator of PDGF-stimulated cell migration; through dephosphorylation of PDGFR. Positive regulator of endothelial cell survival, as well as of VEGF-induced SRC and AKT activation; through KDR dephosphorylation. Negative regulator of EGFR signaling pathway; through EGFR dephosphorylation. Enhances the barrier function of epithelial junctions during reassembly. Negatively regulates T-cell receptor (TCR) signaling. Upon T-cell TCR activation, it is up-regulated and excluded from the immunological synapses, while upon T-cell-antigen presenting cells (APC) disengagement, it is no longer excluded and can dephosphorylate PLCG1 and LAT to down-regulate prolongation of signaling. This chain is Receptor-type tyrosine-protein phosphatase eta (Ptprj), found in Mus musculus (Mouse).